Consider the following 298-residue polypeptide: Inosose dehydratase (298 aa).

Belongs to the IolE/MocC family. It depends on glutathione as a cofactor. The cofactor is Co(2+). Mn(2+) is required as a cofactor.

The enzyme catalyses scyllo-inosose = 3D-3,5/4-trihydroxycyclohexane-1,2-dione + H2O. It participates in polyol metabolism; myo-inositol degradation into acetyl-CoA; acetyl-CoA from myo-inositol: step 2/7. In terms of biological role, catalyzes the dehydration of inosose (2-keto-myo-inositol, 2KMI or 2,4,6/3,5-pentahydroxycyclohexanone) to 3D-(3,5/4)-trihydroxycyclohexane-1,2-dione (D-2,3-diketo-4-deoxy-epi-inositol). The polypeptide is Inosose dehydratase (Geobacillus thermodenitrificans (strain NG80-2)).